The sequence spans 136 residues: Secreted RxLR effector protein 63 (136 aa).

Residues 1–21 (MQRFPYSLLLLLLSATNRSRR) form the signal peptide. Residues 43 to 46 (RMLR) carry the RxLR motif.

This sequence belongs to the RxLR effector family.

The protein resides in the secreted. It is found in the host nucleus. Functionally, effector that partially suppresses the tobacco programmed cell death induced by cell death-inducing proteins. This is Secreted RxLR effector protein 63 from Plasmopara viticola (Downy mildew of grapevine).